The sequence spans 203 residues: Ribosomal RNA small subunit methyltransferase G (203 aa).

Residues G75, L80, 126–127 (VE), and R141 contribute to the S-adenosyl-L-methionine site.

Belongs to the methyltransferase superfamily. RNA methyltransferase RsmG family.

The protein localises to the cytoplasm. It catalyses the reaction guanosine(527) in 16S rRNA + S-adenosyl-L-methionine = N(7)-methylguanosine(527) in 16S rRNA + S-adenosyl-L-homocysteine. Specifically methylates the N7 position of guanine in position 527 of 16S rRNA. In Ruthia magnifica subsp. Calyptogena magnifica, this protein is Ribosomal RNA small subunit methyltransferase G.